The chain runs to 592 residues: Alanine aminotransferase, mitochondrial (592 aa).

The transit peptide at 1 to 64 directs the protein to the mitochondrion; the sequence is MLSLSAKNHF…RKVRPVLQRH (64 aa). The residue at position 77 (S77) is a Phosphoserine. A258, S259, Y284, N340, and S409 together coordinate pyridoxal 5'-phosphate. The residue at position 412 (K412) is an N6-(pyridoxal phosphate)lysine. Position 421 (R421) interacts with pyridoxal 5'-phosphate.

This sequence belongs to the class-I pyridoxal-phosphate-dependent aminotransferase family. Alanine aminotransferase subfamily. In terms of assembly, homodimer. The cofactor is pyridoxal 5'-phosphate.

It is found in the mitochondrion matrix. The catalysed reaction is L-alanine + 2-oxoglutarate = pyruvate + L-glutamate. It participates in amino-acid degradation; L-alanine degradation via transaminase pathway; pyruvate from L-alanine: step 1/1. In terms of biological role, alanine aminotransferase involved in both alanine biosynthesis and utilization. Under respiratory conditions, constitutes the sole pathway for alanine biosynthesis and catabolism. Under fermentative conditions, it plays a catabolic role and alanine is mainly synthesized through an alternative pathway. The sequence is that of Alanine aminotransferase, mitochondrial (ALT1) from Saccharomyces cerevisiae (strain ATCC 204508 / S288c) (Baker's yeast).